A 643-amino-acid chain; its full sequence is Transmembrane 9 superfamily member 4 (643 aa).

A signal peptide spans 1–23; it reads MAAAMIWWPRFLLLLCLTCKGST. Topologically, residues 24–282 are extracellular; that stretch reads FYVPGVAPIN…TMSDVQIHWF (259 aa). A helical membrane pass occupies residues 283–303; that stretch reads SIINSVVVVFFLSGILSMIII. Over 304–347 the chain is Cytoplasmic; that stretch reads RTLRKDIANYNKEDDIEDTMEESGWKLVHGDVFRPPQYPMILSS. Phosphotyrosine is present on Tyr-313. Residues 348–368 traverse the membrane as a helical segment; sequence LLGSGIQLFCMILIVIFVAML. The Extracellular portion of the chain corresponds to 369-377; the sequence is GMLSPSSRG. Residues 378–398 form a helical membrane-spanning segment; sequence ALMTTACFLFMFMGVFGGFSA. The Cytoplasmic segment spans residues 399–417; that stretch reads GRLYRTLKGHRWKKGAFCT. Residues 418–438 traverse the membrane as a helical segment; the sequence is ATLYPGVVFGICFVLNCFIWG. Residues 439-450 lie on the Extracellular side of the membrane; that stretch reads KHSSGAVPFPTM. The helical transmembrane segment at 451-471 threads the bilayer; it reads VALLCMWFGISLPLVYLGYYF. Over 472-502 the chain is Cytoplasmic; that stretch reads GFRKQPYDNPVRTNQIPRQIPEQRWYMNRFV. The chain crosses the membrane as a helical span at residues 503–523; sequence GILMAGILPFGAMFIELFFIF. Residues 524–536 lie on the Extracellular side of the membrane; that stretch reads SAIWENQFYYLFG. A helical transmembrane segment spans residues 537-557; it reads FLFLVFIILVVSCSQISIVMV. Over 558–571 the chain is Cytoplasmic; sequence YFQLCAEDYRWWWR. The helical transmembrane segment at 572–592 threads the bilayer; that stretch reads NFLVSGGSAFYVLVYAIFYFV. Residues 593–599 are Extracellular-facing; sequence NKLDIVE. The helical transmembrane segment at 600 to 620 threads the bilayer; it reads FIPSLLYFGYTTLMVLSFWLL. At 621–643 the chain is on the cytoplasmic side; it reads TGTIGFYAAYMFVRKIYAAVKID.

It belongs to the nonaspanin (TM9SF) (TC 9.A.2) family.

It is found in the membrane. It localises to the golgi apparatus. The protein resides in the early endosome. Functionally, associates with proteins harboring glycine-rich transmembrane domains and ensures their efficient localization to the cell surface. This is Transmembrane 9 superfamily member 4 (Tm9sf4) from Mus musculus (Mouse).